The primary structure comprises 140 residues: MLMPKRVKHRKQMKGRMTGAACRRIEISYGEFALQATECGWVDSRQIEAARIAMTRYIKRGGKIWIRMFPDKPLTAKPAETRMGKGKGSPDSWVCVVKPGMVLYEMEGVTEEIAREAFRLAAHKLPISTKFITRGTQNEG.

Belongs to the universal ribosomal protein uL16 family. In terms of assembly, part of the 50S ribosomal subunit.

In terms of biological role, binds 23S rRNA and is also seen to make contacts with the A and possibly P site tRNAs. This Trichlorobacter lovleyi (strain ATCC BAA-1151 / DSM 17278 / SZ) (Geobacter lovleyi) protein is Large ribosomal subunit protein uL16.